The primary structure comprises 518 residues: Bifunctional enzyme NanE/NanK (518 aa).

The interval 1–234 (MCRVQGMIEE…DAVESAAKPS (234 aa)) is manNAc-6-P epimerase. Residues 235–518 (SPVLAFDIGG…VADLAATYFS (284 aa)) are manNAc kinase. ATP contacts are provided by residues 239-246 (AFDIGGTK) and 365-372 (GIGGGIVL).

This sequence in the N-terminal section; belongs to the NanE family. In the C-terminal section; belongs to the ROK (NagC/XylR) family. NanK subfamily.

The enzyme catalyses an N-acyl-D-glucosamine 6-phosphate = an N-acyl-D-mannosamine 6-phosphate. The catalysed reaction is an N-acyl-D-mannosamine + ATP = an N-acyl-D-mannosamine 6-phosphate + ADP + H(+). Its pathway is amino-sugar metabolism; N-acetylneuraminate degradation; D-fructose 6-phosphate from N-acetylneuraminate: step 2/5. The protein operates within amino-sugar metabolism; N-acetylneuraminate degradation; D-fructose 6-phosphate from N-acetylneuraminate: step 3/5. Its function is as follows. Converts N-acetylmannosamine-6-phosphate (ManNAc-6-P) to N-acetylglucosamine-6-phosphate (GlcNAc-6-P). Catalyzes the phosphorylation of N-acetylmannosamine (ManNAc) to ManNAc-6-P. The sequence is that of Bifunctional enzyme NanE/NanK (nanEK) from Brucella melitensis biotype 1 (strain ATCC 23456 / CCUG 17765 / NCTC 10094 / 16M).